Consider the following 212-residue polypeptide: TATA-box-binding protein 2 (212 aa).

2 repeat units span residues 30–114 (THPE…KKIG) and 120–201 (SNFN…YPIL).

This sequence belongs to the TBP family. As to quaternary structure, belongs to the TFIID complex together with the TBP-associated factors (TAFs). Binds DNA as monomer.

The protein resides in the nucleus. Functionally, general transcription factor that functions at the core of the DNA-binding multiprotein factor TFIID. Binding of TFIID to the TATA box is the initial transcriptional step of the pre-initiation complex (PIC), playing a role in the activation of eukaryotic genes transcribed by RNA polymerase II. In Entamoeba histolytica (strain ATCC 30459 / HM-1:IMSS / ABRM), this protein is TATA-box-binding protein 2.